Reading from the N-terminus, the 303-residue chain is Peroxisomal trans-2-enoyl-CoA reductase (303 aa).

NADP(+) is bound at residue 23-47 (VTGGATGIGKAIVKELLELGSNVVI). K32 carries the N6-succinyllysine modification. S49 carries the phosphoserine modification. Y179 serves as the catalytic Proton acceptor. Y179 is subject to Phosphotyrosine. The Microbody targeting signal motif lies at 301 to 303 (AKL).

It belongs to the short-chain dehydrogenases/reductases (SDR) family. As to quaternary structure, interacts with PEX5, probably required to target it into peroxisomes.

It localises to the peroxisome. The catalysed reaction is a (2E)-enoyl-CoA + NADPH + H(+) = a 2,3-saturated acyl-CoA + NADP(+). The enzyme catalyses (2E)-hexenoyl-CoA + NADPH + H(+) = hexanoyl-CoA + NADP(+). It catalyses the reaction (2E)-octenoyl-CoA + NADPH + H(+) = octanoyl-CoA + NADP(+). It carries out the reaction (2E)-decenoyl-CoA + NADPH + H(+) = decanoyl-CoA + NADP(+). The catalysed reaction is (2E)-dodecenoyl-CoA + NADPH + H(+) = dodecanoyl-CoA + NADP(+). The enzyme catalyses (2E)-tetradecenoyl-CoA + NADPH + H(+) = tetradecanoyl-CoA + NADP(+). It functions in the pathway lipid metabolism; fatty acid biosynthesis. Its function is as follows. Participates in chain elongation of fatty acids. Catalyzes the reduction of trans-2-enoyl-CoAs of varying chain lengths from 6:1 to 16:1, having maximum activity with 10:1 CoA. Has no 2,4-dienoyl-CoA reductase activity. The chain is Peroxisomal trans-2-enoyl-CoA reductase (PECR) from Pongo abelii (Sumatran orangutan).